We begin with the raw amino-acid sequence, 208 residues long: Uracil phosphoribosyltransferase (208 aa).

Residues R78, R103, and 130-138 (DPMLATGGS) each bind 5-phospho-alpha-D-ribose 1-diphosphate. Uracil is bound by residues I193 and 198–200 (GDA). 5-phospho-alpha-D-ribose 1-diphosphate is bound at residue D199.

This sequence belongs to the UPRTase family. Requires Mg(2+) as cofactor.

It carries out the reaction UMP + diphosphate = 5-phospho-alpha-D-ribose 1-diphosphate + uracil. The protein operates within pyrimidine metabolism; UMP biosynthesis via salvage pathway; UMP from uracil: step 1/1. Allosterically activated by GTP. Functionally, catalyzes the conversion of uracil and 5-phospho-alpha-D-ribose 1-diphosphate (PRPP) to UMP and diphosphate. This is Uracil phosphoribosyltransferase from Aeromonas salmonicida (strain A449).